The sequence spans 192 residues: Erythropoietin (192 aa).

Residues 1-26 form the signal peptide; sequence MGVPERPTLLLLLSLLLIPLGLPVLC. A disulfide bridge connects residues C33 and C187. N-linked (GlcNAc...) asparagine glycosylation is found at N50, N64, and N109.

This sequence belongs to the EPO/TPO family. Produced by kidney or liver of adult mammals and by liver of fetal or neonatal mammals.

Its subcellular location is the secreted. In terms of biological role, hormone involved in the regulation of erythrocyte proliferation and differentiation and the maintenance of a physiological level of circulating erythrocyte mass. Binds to EPOR leading to EPOR dimerization and JAK2 activation thereby activating specific downstream effectors, including STAT1 and STAT3. The chain is Erythropoietin (Epo) from Mus musculus (Mouse).